Reading from the N-terminus, the 170-residue chain is dCTP pyrophosphatase 1 (170 aa).

Positions methionine 1–phenylalanine 25 are disordered. At serine 2 the chain carries N-acetylserine. Serine 2 is modified (phosphoserine). Substrate is bound by residues histidine 38 and tryptophan 47 to histidine 51. The Mg(2+) site is built by glutamate 63 and glutamate 66. A substrate-binding site is contributed by tryptophan 73. Residues glutamate 95 and aspartate 98 each coordinate Mg(2+). Tyrosine 102 contributes to the substrate binding site. The segment at serine 150–threonine 170 is disordered.

As to quaternary structure, homotetramer. It depends on Mg(2+) as a cofactor. As to expression, ubiquitous. Highly expressed in heart, liver, skeletal muscle, cerebellum, brain, and salivary gland.

It localises to the cytoplasm. The protein resides in the cytosol. It catalyses the reaction dCTP + H2O = dCMP + diphosphate + H(+). With respect to regulation, inhibited by divalent calcium or cadmium ions. In terms of biological role, hydrolyzes deoxynucleoside triphosphates (dNTPs) to the corresponding nucleoside monophosphates. Has a strong preference for dCTP and its analogs including 5-iodo-dCTP and 5-methyl-dCTP for which it may even have a higher efficiency. May protect DNA or RNA against the incorporation of these genotoxic nucleotide analogs through their catabolism. The sequence is that of dCTP pyrophosphatase 1 from Mus musculus (Mouse).